Reading from the N-terminus, the 1219-residue chain is FK506-binding protein 15 (1219 aa).

Met-1 carries the N-acetylmethionine modification. A phosphoserine mark is found at Ser-14 and Ser-23. A disordered region spans residues 41–66 (YTAPKQPKKGQGTAATGNQATPKTAP). Positions 53–66 (TAATGNQATPKTAP) are enriched in polar residues. The tract at residues 72 to 169 (PTILVATAVH…AVEFNKQVCI (98 aa)) is important for function in growth cone organization. The residue at position 92 (Lys-92) is an N6-acetyllysine. The PPIase FKBP-type domain occupies 197 to 290 (GDSLEVAYTG…VFEVEVRRVK (94 aa)). Residues 294-349 (DSGSDGHSVSSRDSAAPSPIPGADNLSADPVVSPPTSIPFKSGEPALRTKSNSLSE) are disordered. 6 positions are modified to phosphoserine: Ser-307, Ser-311, Ser-326, Ser-344, Ser-346, and Ser-356. Positions 381–433 (PQLDSNDSEIEDVNTLQGGGQPVVTPSVQPSLHPAHPALPQMTSQAPQPSVTG) are disordered. Residues 421–433 (QMTSQAPQPSVTG) are compositionally biased toward polar residues. Coiled-coil stretches lie at residues 522 to 789 (AVSK…TDQA), 818 to 878 (DEHL…GVEA), and 925 to 951 (TLQL…AEER). Phosphoserine is present on Ser-619. A disordered region spans residues 739–761 (LEKNLSERKKKSAQERSQAEEEI). The segment at 931–1219 (QQEQEKEESS…DDDDDIDWLG (289 aa)) is disordered. 4 positions are modified to phosphoserine: Ser-939, Ser-940, Ser-941, and Ser-956. Low complexity predominate over residues 957-971 (QEQSASASSGQPQAP). A phosphoserine mark is found at Ser-979, Ser-1024, Ser-1056, Ser-1061, Ser-1065, and Ser-1097. Residues 1090 to 1100 (QESSTRLSLTS) show a composition bias toward polar residues. Thr-1099 is modified (phosphothreonine). Ser-1114 is modified (phosphoserine). The segment covering 1123–1139 (LKKDDVTSSTGPHKELS) has biased composition (basic and acidic residues). Phosphoserine is present on residues Ser-1158, Ser-1161, Ser-1162, Ser-1164, and Ser-1195. Thr-1203 carries the phosphothreonine modification. The segment covering 1207 to 1219 (GDDDDDDDIDWLG) has biased composition (acidic residues).

The protein belongs to the FKBP-type PPIase family. Interacts with WIP and actin. Interacts with TBC1D23.

Its subcellular location is the cytoplasm. It localises to the cell projection. The protein localises to the axon. The protein resides in the early endosome. Its function is as follows. May be involved in the cytoskeletal organization of neuronal growth cones. Seems to be inactive as a PPIase. Involved in the transport of early endosomes at the level of transition between microfilament-based and microtubule-based movement. The sequence is that of FK506-binding protein 15 (FKBP15) from Homo sapiens (Human).